Here is a 70-residue protein sequence, read N- to C-terminus: Large ribosomal subunit protein eL38 (70 aa).

It belongs to the eukaryotic ribosomal protein eL38 family.

In Drosophila melanogaster (Fruit fly), this protein is Large ribosomal subunit protein eL38 (RpL38).